Here is a 449-residue protein sequence, read N- to C-terminus: Hyaluronidase-4 (449 aa).

An N-terminal signal peptide occupies residues methionine 1–valine 23. 2 disulfide bridges follow: cysteine 47–cysteine 340 and cysteine 211–cysteine 227. Asparagine 67, asparagine 103, and asparagine 111 each carry an N-linked (GlcNAc...) asparagine glycan. Residue glutamate 135 is the Proton donor of the active site. Residue asparagine 153 is glycosylated (N-linked (GlcNAc...) asparagine). The N-linked (GlcNAc...) asparagine glycan is linked to asparagine 357. Cystine bridges form between cysteine 365-cysteine 376, cysteine 370-cysteine 427, and cysteine 429-cysteine 438. A glycan (N-linked (GlcNAc...) asparagine) is linked at asparagine 401. The region spanning cysteine 427 to cysteine 438 is the EGF-like domain.

This sequence belongs to the glycosyl hydrolase 56 family. As to quaternary structure, monomer. In terms of tissue distribution, expressed by the venom gland.

It is found in the secreted. The catalysed reaction is Random hydrolysis of (1-&gt;4)-linkages between N-acetyl-beta-D-glucosamine and D-glucuronate residues in hyaluronate.. Functionally, snake venom endo-hyaluronidase that degrades hyaluronan to smaller oligosaccharide fragments. In venom, it is not toxic by itself, but increases the diffusion of other venom proteins by degrading the extracellular matrix. In addition, it displays antiedematogenic activity. This Cerastes cerastes (Horned desert viper) protein is Hyaluronidase-4.